We begin with the raw amino-acid sequence, 112 residues long: UPF0060 membrane protein SCO3297 (112 aa).

The next 4 helical transmembrane spans lie at 8–28, 33–53, 62–82, and 88–108; these read ALFVVAALFEIGGAWLVWQGV, GWLWAAGGVLALGAYGFVATF, ILAAYGGIFVTGSILWGVVAD, and RWDIAGALVCLAGMALIMWAP.

It belongs to the UPF0060 family.

The protein resides in the cell membrane. The protein is UPF0060 membrane protein SCO3297 of Streptomyces coelicolor (strain ATCC BAA-471 / A3(2) / M145).